Reading from the N-terminus, the 150-residue chain is T-complex protein 1 subunit beta (150 aa).

Asp-35 provides a ligand contact to Mg(2+). Positions 36, 37, 38, and 39 each coordinate ADP. 3 residues coordinate ATP: Gly-36, Thr-37, and Thr-38.

The protein belongs to the TCP-1 chaperonin family. In terms of assembly, component of the chaperonin-containing T-complex (TRiC), a hexadecamer composed of two identical back-to-back stacked rings enclosing a protein folding chamber. Each ring is made up of eight different subunits: TCP1/CCT1, CCT2, CCT3, CCT4, CCT5, CCT6A/CCT6, CCT7, CCT8. Interacts with PACRG. Interacts with FLCN. Interacts with DLEC1. Interacts with SVEP1.

Its subcellular location is the cytoplasm. It catalyses the reaction ATP + H2O = ADP + phosphate + H(+). Functionally, component of the chaperonin-containing T-complex (TRiC), a molecular chaperone complex that assists the folding of actin, tubulin and other proteins upon ATP hydrolysis. The TRiC complex mediates the folding of WRAP53/TCAB1, thereby regulating telomere maintenance. As part of the TRiC complex may play a role in the assembly of BBSome, a complex involved in ciliogenesis regulating transports vesicles to the cilia. The sequence is that of T-complex protein 1 subunit beta from Mesocricetus auratus (Golden hamster).